Consider the following 246-residue polypeptide: Peptide methionine sulfoxide reductase (246 aa).

Residue C48 is the Cysteine sulfenic acid (-SOH) intermediate of the active site. C48 and C246 are disulfide-bonded.

In terms of processing, conjugated to URM1, a ubiquitin-like protein.

It catalyses the reaction L-methionyl-[protein] + [thioredoxin]-disulfide + H2O = L-methionyl-(S)-S-oxide-[protein] + [thioredoxin]-dithiol. The catalysed reaction is [thioredoxin]-disulfide + L-methionine + H2O = L-methionine (S)-S-oxide + [thioredoxin]-dithiol. Has an important function as a repair enzyme for proteins that have been inactivated by oxidation. Catalyzes the reduction of methionine sulfoxide in proteins to methionine. Does not catalyze the reverse reaction involving the oxidation of methionine residues. This chain is Peptide methionine sulfoxide reductase, found in Drosophila melanogaster (Fruit fly).